The chain runs to 148 residues: Large ribosomal subunit protein uL22 (148 aa).

It belongs to the universal ribosomal protein uL22 family. Part of the 50S ribosomal subunit.

In terms of biological role, this protein binds specifically to 23S rRNA; its binding is stimulated by other ribosomal proteins, e.g. L4, L17, and L20. It is important during the early stages of 50S assembly. It makes multiple contacts with different domains of the 23S rRNA in the assembled 50S subunit and ribosome. Its function is as follows. The globular domain of the protein is located near the polypeptide exit tunnel on the outside of the subunit, while an extended beta-hairpin is found that lines the wall of the exit tunnel in the center of the 70S ribosome. This is Large ribosomal subunit protein uL22 from Thermosipho africanus (strain TCF52B).